We begin with the raw amino-acid sequence, 550 residues long: Urocanate hydratase (550 aa).

Residues 48–49, Gln126, 172–174, Glu192, Arg197, 238–239, 259–263, 268–269, and Tyr317 contribute to the NAD(+) site; these read GG, GMG, NA, QTSAH, and YL. Cys405 is a catalytic residue. NAD(+) is bound at residue Gly487.

It belongs to the urocanase family. Requires NAD(+) as cofactor.

Its subcellular location is the cytoplasm. It catalyses the reaction 4-imidazolone-5-propanoate = trans-urocanate + H2O. The protein operates within amino-acid degradation; L-histidine degradation into L-glutamate; N-formimidoyl-L-glutamate from L-histidine: step 2/3. In terms of biological role, catalyzes the conversion of urocanate to 4-imidazolone-5-propionate. The chain is Urocanate hydratase from Saccharopolyspora erythraea (strain ATCC 11635 / DSM 40517 / JCM 4748 / NBRC 13426 / NCIMB 8594 / NRRL 2338).